The chain runs to 432 residues: uncharacterized protein (432 aa).

Positions 1–18 (MAIGDKRKKNRKNKQNKK) are enriched in basic residues. Disordered stretches follow at residues 1–23 (MAIG…KNDN), 37–56 (NSNS…NGNG), and 122–168 (STNS…GSSL). Composition is skewed to low complexity over residues 37-53 (NSNS…NNKN), 122-147 (STNS…QQQQ), and 154-168 (ESQS…GSSL). A coiled-coil region spans residues 181-226 (LNDQLKIVQLEQKIVNLEKEIQRMRNEQNQIHKQNLNQYHELLKQI). Disordered stretches follow at residues 270–290 (VQPV…KSNG) and 310–432 (SSKF…STLR). Positions 274 to 288 (STPSSSSNSLASKKS) are enriched in low complexity. Over residues 311-324 (SKFAQSNSSPSRVN) the composition is skewed to polar residues. Positions 352–378 (KKSATTTTTSSSSNNATTTTAKGSTST) are enriched in low complexity. Residues 383–414 (ITNSNNIKNSVLSPKSITKPNTPSNIIFSPLS) show a composition bias toward polar residues.

This is an uncharacterized protein from Dictyostelium discoideum (Social amoeba).